A 139-amino-acid polypeptide reads, in one-letter code: D-ribose pyranase (139 aa).

The Proton donor role is filled by histidine 20. Residues aspartate 28, histidine 106, and 128–130 contribute to the substrate site; that span reads YAN.

The protein belongs to the RbsD / FucU family. RbsD subfamily. As to quaternary structure, homodecamer.

Its subcellular location is the cytoplasm. It catalyses the reaction beta-D-ribopyranose = beta-D-ribofuranose. It participates in carbohydrate metabolism; D-ribose degradation; D-ribose 5-phosphate from beta-D-ribopyranose: step 1/2. Its function is as follows. Catalyzes the interconversion of beta-pyran and beta-furan forms of D-ribose. This is D-ribose pyranase from Citrobacter koseri (strain ATCC BAA-895 / CDC 4225-83 / SGSC4696).